The sequence spans 83 residues: Putative defensin-like protein 67 (83 aa).

The first 24 residues, 1-24 (MGSSKLMVTCIVVAMLTISCDILS), serve as a signal peptide directing secretion. 4 disulfide bridges follow: Cys-38/Cys-82, Cys-42/Cys-65, Cys-51/Cys-80, and Cys-55/Cys-81.

Belongs to the DEFL family.

The protein resides in the secreted. In Arabidopsis thaliana (Mouse-ear cress), this protein is Putative defensin-like protein 67.